The primary structure comprises 601 residues: Testis-specific gene 10 protein (601 aa).

The segment covering 1 to 10 (MMRSRSKSPR) has biased composition (basic residues). Disordered stretches follow at residues 1–20 (MMRS…RGAN) and 563–588 (VSST…DRGL). The interaction with HIF1A stretch occupies residues 459–592 (QMTNERISMQ…SPDRGLDRSL (134 aa)). Over residues 563 to 573 (VSSTMKPNTKC) the composition is skewed to polar residues. Residues 574 to 588 (HSPERAHHRSPDRGL) show a composition bias toward basic and acidic residues. Phosphoserine is present on S591.

The protein belongs to the CEP135/TSGA10 family. Interacts with HIF1A. Post-translationally, processed into N-terminal 27-kDa and C-terminal 55-kDa fragments.

It localises to the cytoplasm. It is found in the cytoskeleton. Its subcellular location is the microtubule organizing center. The protein resides in the centrosome. The protein localises to the centriole. Its function is as follows. Plays a role in spermatogenesis. When overexpressed, prevents nuclear localization of HIF1A. The polypeptide is Testis-specific gene 10 protein (TSGA10) (Macaca fascicularis (Crab-eating macaque)).